Here is a 518-residue protein sequence, read N- to C-terminus: Zinc finger protein 449 (518 aa).

Residues 30 to 112 (RQRFRQFQYR…SLIEDLQREL (83 aa)) form the SCAN box domain. The segment covering 292–304 (NPTLGETPENSNL) has biased composition (polar residues). Residues 292-325 (NPTLGETPENSNLEEPLNPKPHKKKSPGEKPHRC) form a disordered region. C2H2-type zinc fingers lie at residues 323 to 345 (HRCPQCGKCFARKSQLTGHQRIH), 351 to 373 (HKCPECGKRFLRSSDLYRHQRLH), 379 to 401 (YECTVCKKRFTRRSHLIGHQRTH), 407 to 429 (YKCLECGKSFCHGSSLKRHLKTH), 435 to 457 (HRCHNCGKSFSRLTALTLHQRTH), 463 to 485 (FKCNYCGKSFRQRPSLVIHLRIH), and 491 to 513 (YKCTHCSKSFRQRAGLIMHQVTH).

Belongs to the krueppel C2H2-type zinc-finger protein family.

The protein resides in the nucleus. May be involved in transcriptional regulation. The polypeptide is Zinc finger protein 449 (ZNF449) (Pan troglodytes (Chimpanzee)).